A 224-amino-acid polypeptide reads, in one-letter code: Small ribosomal subunit protein uS3 (224 aa).

Residues 38 to 106 form the KH type-2 domain; it reads LREFVKEKLG…EVYLNVVEVR (69 aa).

Belongs to the universal ribosomal protein uS3 family. In terms of assembly, part of the 30S ribosomal subunit. Forms a tight complex with proteins S10 and S14.

Binds the lower part of the 30S subunit head. Binds mRNA in the 70S ribosome, positioning it for translation. The sequence is that of Small ribosomal subunit protein uS3 from Anaeromyxobacter dehalogenans (strain 2CP-C).